A 159-amino-acid chain; its full sequence is NADH-quinone oxidoreductase subunit B (159 aa).

[4Fe-4S] cluster-binding residues include Cys36, Cys37, Cys102, and Cys132.

Belongs to the complex I 20 kDa subunit family. NDH-1 is composed of 14 different subunits. Subunits NuoB, C, D, E, F, and G constitute the peripheral sector of the complex. The cofactor is [4Fe-4S] cluster.

The protein localises to the cell inner membrane. It catalyses the reaction a quinone + NADH + 5 H(+)(in) = a quinol + NAD(+) + 4 H(+)(out). Functionally, NDH-1 shuttles electrons from NADH, via FMN and iron-sulfur (Fe-S) centers, to quinones in the respiratory chain. Couples the redox reaction to proton translocation (for every two electrons transferred, four hydrogen ions are translocated across the cytoplasmic membrane), and thus conserves the redox energy in a proton gradient. The sequence is that of NADH-quinone oxidoreductase subunit B from Verminephrobacter eiseniae (strain EF01-2).